Reading from the N-terminus, the 98-residue chain is NADH-ubiquinone oxidoreductase chain 4L (98 aa).

3 helical membrane-spanning segments follow: residues 1–21 (MSLI…GLLM), 29–49 (ALLC…LTIL), and 61–81 (IILL…LVMI).

The protein belongs to the complex I subunit 4L family. Core subunit of respiratory chain NADH dehydrogenase (Complex I) which is composed of 45 different subunits.

It localises to the mitochondrion inner membrane. It carries out the reaction a ubiquinone + NADH + 5 H(+)(in) = a ubiquinol + NAD(+) + 4 H(+)(out). Functionally, core subunit of the mitochondrial membrane respiratory chain NADH dehydrogenase (Complex I) which catalyzes electron transfer from NADH through the respiratory chain, using ubiquinone as an electron acceptor. Part of the enzyme membrane arm which is embedded in the lipid bilayer and involved in proton translocation. This is NADH-ubiquinone oxidoreductase chain 4L (MT-ND4L) from Platanista minor (Indus river dolphin).